The chain runs to 138 residues: Phosphoribosyl-AMP cyclohydrolase (138 aa).

D84 lines the Mg(2+) pocket. C85 lines the Zn(2+) pocket. Mg(2+)-binding residues include D86 and D88. The Zn(2+) site is built by C102 and C109.

Belongs to the PRA-CH family. As to quaternary structure, homodimer. Requires Mg(2+) as cofactor. Zn(2+) is required as a cofactor.

It localises to the cytoplasm. It catalyses the reaction 1-(5-phospho-beta-D-ribosyl)-5'-AMP + H2O = 1-(5-phospho-beta-D-ribosyl)-5-[(5-phospho-beta-D-ribosylamino)methylideneamino]imidazole-4-carboxamide. Its pathway is amino-acid biosynthesis; L-histidine biosynthesis; L-histidine from 5-phospho-alpha-D-ribose 1-diphosphate: step 3/9. Its function is as follows. Catalyzes the hydrolysis of the adenine ring of phosphoribosyl-AMP. The polypeptide is Phosphoribosyl-AMP cyclohydrolase (Burkholderia pseudomallei (strain K96243)).